A 526-amino-acid polypeptide reads, in one-letter code: O-phosphoserine--tRNA(Cys) ligase (526 aa).

Residues 189–191 (HMT), 234–236 (SAS), 276–277 (YY), and Asn-319 each bind substrate.

The protein belongs to the class-II aminoacyl-tRNA synthetase family. O-phosphoseryl-tRNA(Cys) synthetase subfamily. Homotetramer. Interacts with SepCysS.

The enzyme catalyses tRNA(Cys) + O-phospho-L-serine + ATP = O-phospho-L-seryl-tRNA(Cys) + AMP + diphosphate. Functionally, catalyzes the attachment of O-phosphoserine (Sep) to tRNA(Cys). This chain is O-phosphoserine--tRNA(Cys) ligase, found in Methanocorpusculum labreanum (strain ATCC 43576 / DSM 4855 / Z).